We begin with the raw amino-acid sequence, 60 residues long: UPF0509 protein ESA_01586 (60 aa).

Belongs to the UPF0509 family.

The chain is UPF0509 protein ESA_01586 from Cronobacter sakazakii (strain ATCC BAA-894) (Enterobacter sakazakii).